A 150-amino-acid polypeptide reads, in one-letter code: Large ribosomal subunit protein uL15 (150 aa).

A disordered region spans residues 1 to 58; it reads MNLSGIKPPKGQVKTKKRIGRGMGSGHGKTATRGSKGQHAGTGFSQKRGFEGGQMPLH.

It belongs to the universal ribosomal protein uL15 family. Part of the 50S ribosomal subunit.

Functionally, binds to the 23S rRNA. In Solibacter usitatus (strain Ellin6076), this protein is Large ribosomal subunit protein uL15.